We begin with the raw amino-acid sequence, 255 residues long: Small ribosomal subunit protein uS10m (255 aa).

The N-terminal 32 residues, methionine 1–leucine 32, are a transit peptide targeting the mitochondrion. 2 disordered regions span residues arginine 30–threonine 52 and serine 220–serine 255. Residues aspartate 236–serine 255 are compositionally biased toward basic and acidic residues.

It belongs to the universal ribosomal protein uS10 family. As to quaternary structure, part of the mitochondrial small ribosomal subunit.

The protein resides in the mitochondrion. Involved in mitochondrial genome encoded proteins translation. Involved in the binding of tRNA to the ribosomes. The sequence is that of Small ribosomal subunit protein uS10m (RSM10) from Cryptococcus neoformans var. neoformans serotype D (strain B-3501A) (Filobasidiella neoformans).